We begin with the raw amino-acid sequence, 635 residues long: Threonine--tRNA ligase (635 aa).

The TGS domain maps to 1–61 (MVSIRLPDGS…DHDASLAIVT (61 aa)). Positions 242–533 (DHRKLGKQLD…LIEHHAGAMP (292 aa)) are catalytic. Zn(2+) contacts are provided by C333, H384, and H510.

Belongs to the class-II aminoacyl-tRNA synthetase family. In terms of assembly, homodimer. The cofactor is Zn(2+).

The protein resides in the cytoplasm. The catalysed reaction is tRNA(Thr) + L-threonine + ATP = L-threonyl-tRNA(Thr) + AMP + diphosphate + H(+). Catalyzes the attachment of threonine to tRNA(Thr) in a two-step reaction: L-threonine is first activated by ATP to form Thr-AMP and then transferred to the acceptor end of tRNA(Thr). Also edits incorrectly charged L-seryl-tRNA(Thr). This is Threonine--tRNA ligase from Burkholderia multivorans (strain ATCC 17616 / 249).